A 782-amino-acid polypeptide reads, in one-letter code: Small RNA degrading nuclease 3 (782 aa).

The Exonuclease domain maps to 145–296; the sequence is MLSIDCEMVT…HDAAAAMKLV (152 aa). The RRM 1 domain occupies 331 to 410; that stretch reads AQLFLHKIPH…KKAVLKLSSG (80 aa). The interval 426–464 is disordered; sequence PCEISTSERARAEENNVSSKRQKTEDETEETKEATVNQR. One can recognise an RRM 2 domain in the interval 469-549; the sequence is TKLFLHKIPH…KMVVFKLSSG (81 aa). The tract at residues 563-605 is disordered; it reads DSPGEISTTKRARTEESNMSSKRQKTEDESEETKEANAKQREA. Residues 577–605 adopt a coiled-coil conformation; the sequence is EESNMSSKRQKTEDESEETKEANAKQREA. Over residues 595–605 the composition is skewed to basic and acidic residues; sequence TKEANAKQREA. The region spanning 608–688 is the RRM 3 domain; it reads TKLLLHKIPL…KMVAFKLSSG (81 aa). Residues 709–779 are a coiled coil; sequence ANANHCEDDH…KMKLEKKQSK (71 aa).

This sequence belongs to the REXO1/REXO3 family. In terms of assembly, associated with the Mediator complex.

It localises to the nucleus. 3'-5' exonuclease degrading single-stranded small RNAs. This is Small RNA degrading nuclease 3 (SDN3) from Arabidopsis thaliana (Mouse-ear cress).